Reading from the N-terminus, the 886-residue chain is Probable mixed-linked glucan synthase 8 (886 aa).

2 helical membrane passes run 87-107 (ILLH…VLFF) and 118-138 (GMFF…SWLL). D213 is a catalytic residue. D413 and D415 together coordinate substrate. D577 is an active-site residue. 6 helical membrane passes run 659 to 679 (VFLL…IFYI), 683 to 703 (FPTY…IGMV), 723 to 743 (IIGA…KCFG), 775 to 795 (LLFP…AAIG), 812 to 832 (LGLV…LGIM), and 840 to 860 (YILF…DIAI).

The protein belongs to the glycosyltransferase 2 family. Plant cellulose synthase-like F subfamily.

The protein localises to the golgi apparatus membrane. In terms of biological role, may catalyze both beta-1,3 and beta-1,4 glycosidic linkage on beta-D-glucan. Essential for (1,3;1,4)-beta-D-glucans synthesis in grasses and cereals (Poaceae). The mixed-linked glucans (which are not present in walls of dicotyledons or most other monocotyledonous plants) are particularly important constituents of the walls of the starchy endosperm and aleurone cells of cereal grains such as oats, wheat, rice and barley. They can account for up to 70% by weight of the wall. The polypeptide is Probable mixed-linked glucan synthase 8 (CSFL8) (Oryza sativa subsp. japonica (Rice)).